The chain runs to 258 residues: Acyl-[acyl-carrier-protein]--UDP-N-acetylglucosamine O-acyltransferase (258 aa).

It belongs to the transferase hexapeptide repeat family. LpxA subfamily. As to quaternary structure, homotrimer.

It is found in the cytoplasm. It catalyses the reaction a (3R)-hydroxyacyl-[ACP] + UDP-N-acetyl-alpha-D-glucosamine = a UDP-3-O-[(3R)-3-hydroxyacyl]-N-acetyl-alpha-D-glucosamine + holo-[ACP]. It participates in glycolipid biosynthesis; lipid IV(A) biosynthesis; lipid IV(A) from (3R)-3-hydroxytetradecanoyl-[acyl-carrier-protein] and UDP-N-acetyl-alpha-D-glucosamine: step 1/6. Involved in the biosynthesis of lipid A, a phosphorylated glycolipid that anchors the lipopolysaccharide to the outer membrane of the cell. In Myxococcus xanthus (strain DK1622), this protein is Acyl-[acyl-carrier-protein]--UDP-N-acetylglucosamine O-acyltransferase.